The primary structure comprises 777 residues: 1,4-alpha-glucan branching enzyme GlgB (777 aa).

Residue Asp-408 is the Nucleophile of the active site. Glu-461 acts as the Proton donor in catalysis.

Belongs to the glycosyl hydrolase 13 family. GlgB subfamily. Monomer.

The catalysed reaction is Transfers a segment of a (1-&gt;4)-alpha-D-glucan chain to a primary hydroxy group in a similar glucan chain.. It functions in the pathway glycan biosynthesis; glycogen biosynthesis. Functionally, catalyzes the formation of the alpha-1,6-glucosidic linkages in glycogen by scission of a 1,4-alpha-linked oligosaccharide from growing alpha-1,4-glucan chains and the subsequent attachment of the oligosaccharide to the alpha-1,6 position. The polypeptide is 1,4-alpha-glucan branching enzyme GlgB (Actinobacillus pleuropneumoniae serotype 5b (strain L20)).